Here is a 205-residue protein sequence, read N- to C-terminus: GTP-binding protein yptV5 (205 aa).

Residue 15-22 coordinates GTP; it reads GDSGVGKT. The Effector region signature appears at 37 to 45; it reads YKATIGADF. GTP contacts are provided by residues 63–67 and 125–128; these read DTAGQ and NKID. 2 S-geranylgeranyl cysteine lipidation sites follow: cysteine 204 and cysteine 205.

The protein belongs to the small GTPase superfamily. Rab family.

The protein resides in the cell membrane. Its function is as follows. Protein transport. Probably involved in vesicular traffic. This chain is GTP-binding protein yptV5 (YPTV5), found in Volvox carteri (Green alga).